The sequence spans 208 residues: Ras-related protein M-Ras (208 aa).

The GTP site is built by Asp21, Gly22, Gly23, Val24, Gly25, Lys26, Ser27, Ala28, Phe38, Val39, Pro40, Tyr42, Pro44, and Thr45. Ser27 contributes to the Mg(2+) binding site. An Effector region motif is present at residues Tyr42–Tyr50. Thr45 and Asp67 together coordinate Mg(2+). Positions 70, 126, 127, 129, 156, 157, and 158 each coordinate GTP. At Cys205 the chain carries Cysteine methyl ester. Cys205 carries the S-geranylgeranyl cysteine lipid modification. The propeptide at Val206–Leu208 is removed in mature form.

Belongs to the small GTPase superfamily. Ras family. As to quaternary structure, component of the SHOC2-MRAS-PP1c (SMP) holophosphatase complex consisting of SHOC2, GTP-bound M-Ras/MRAS and the catalytic subunit of protein phosphatase 1 (either PPP1CA, PPP1CB or PPP1CC). Interacts (active GTP-bound form) with both SHOC2 and PP1c (all isoforms) to form a tertiary complex; SHOC2 and PP1c preferably bind M-Ras/MRAS, but they also bind K-Ras/KRAS, N-Ras/NRAS and H-Ras/HRAS. Interacts with RGL3. Interacts (active GTP-bound form preferentially) with RGS14. The cofactor is Mg(2+). In terms of tissue distribution, expression highly restricted to the brain and heart.

It is found in the cell membrane. The catalysed reaction is GTP + H2O = GDP + phosphate + H(+). Its function is as follows. Signal transducer in the Ras-MAPK signaling pathway that regulates cell proliferation and survival. Core component of the SHOC2-MRAS-PP1c (SMP) holophosphatase complex that regulates the MAPK pathway activation. The formation of the SMP complex only occurs when MRAS is GTP-bound. MRAS has low intrinsic GTPase activity and may require additional factors for activation. The SMP complex specifically dephosphorylates the inhibitory phosphorylation at 'Ser-259' of RAF1 kinase, 'Ser-365' of BRAF kinase and 'Ser-214' of ARAF kinase, stimulating their kinase activities. The protein is Ras-related protein M-Ras (MRAS) of Homo sapiens (Human).